A 270-amino-acid chain; its full sequence is 3-methyl-2-oxobutanoate hydroxymethyltransferase (270 aa).

Residues Asp41 and Asp80 each contribute to the Mg(2+) site. 3-methyl-2-oxobutanoate-binding positions include 41 to 42 (DS), Asp80, and Lys109. A Mg(2+)-binding site is contributed by Glu111. Glu178 serves as the catalytic Proton acceptor.

It belongs to the PanB family. As to quaternary structure, homodecamer; pentamer of dimers. Mg(2+) is required as a cofactor.

The protein resides in the cytoplasm. The catalysed reaction is 3-methyl-2-oxobutanoate + (6R)-5,10-methylene-5,6,7,8-tetrahydrofolate + H2O = 2-dehydropantoate + (6S)-5,6,7,8-tetrahydrofolate. It functions in the pathway cofactor biosynthesis; (R)-pantothenate biosynthesis; (R)-pantoate from 3-methyl-2-oxobutanoate: step 1/2. In terms of biological role, catalyzes the reversible reaction in which hydroxymethyl group from 5,10-methylenetetrahydrofolate is transferred onto alpha-ketoisovalerate to form ketopantoate. In Thermotoga maritima (strain ATCC 43589 / DSM 3109 / JCM 10099 / NBRC 100826 / MSB8), this protein is 3-methyl-2-oxobutanoate hydroxymethyltransferase.